Reading from the N-terminus, the 535-residue chain is Butyrophilin-like protein 9 (535 aa).

The N-terminal stretch at 1-34 (MVDLSVSPDSLKPVSLTSSLVFLMHLLLLQPGEP) is a signal peptide. The Extracellular portion of the chain corresponds to 35–256 (SSEVKVLGPE…VFVPGASAWK (222 aa)). The Ig-like V-type domain maps to 54–135 (EVEFPCHLWP…SDKGTYGCRF (82 aa)). The cysteines at positions 59 and 133 are disulfide-linked. N-linked (GlcNAc...) asparagine glycans are attached at residues N102, N139, and N224. Residues 257–277 (SAFVATLPLLLVLAALALGVL) form a helical membrane-spanning segment. Residues 276–315 (VLRKQRRSREKLRKQAEKRQEKLTAELEKLQTELDWRRAE) adopt a coiled-coil conformation. Residues 278-535 (RKQRRSREKL…EPADPALDWW (258 aa)) are Cytoplasmic-facing. The region spanning 310-509 (DWRRAEGQAE…LTICPLPVRG (200 aa)) is the B30.2/SPRY domain. Positions 340–367 (SLEVSEDGKSVSSRGAPPGPAPGHPQRF) are disordered.

The protein belongs to the immunoglobulin superfamily. BTN/MOG family.

The protein localises to the membrane. The protein is Butyrophilin-like protein 9 (BTNL9) of Homo sapiens (Human).